A 202-amino-acid chain; its full sequence is Imidazoleglycerol-phosphate dehydratase (202 aa).

It belongs to the imidazoleglycerol-phosphate dehydratase family.

The protein resides in the cytoplasm. The catalysed reaction is D-erythro-1-(imidazol-4-yl)glycerol 3-phosphate = 3-(imidazol-4-yl)-2-oxopropyl phosphate + H2O. It functions in the pathway amino-acid biosynthesis; L-histidine biosynthesis; L-histidine from 5-phospho-alpha-D-ribose 1-diphosphate: step 6/9. This is Imidazoleglycerol-phosphate dehydratase from Synechococcus sp. (strain CC9605).